The sequence spans 576 residues: 60 kDa heat shock protein homolog 2, mitochondrial (576 aa).

A mitochondrion-targeting transit peptide spans 1 to 61 (MMRMFRYTNT…AVTMGPKGRN (61 aa)).

It belongs to the chaperonin (HSP60) family. As to expression, first detectable expression is seen in the posterior part of the dorsal tracheal trunk at stage 14-15, which marks the beginning of terminal tracheation. In the larval gut, expression in proventriculus is stronger than in midgut and hindgut. Malpighian tubules shows low expression and late third instar larval imaginal disks and brain showed moderate expression. In larval ovary and testis, expression is strong in the posterior region.

The protein localises to the mitochondrion matrix. Functionally, prevents misfolding and promotes the refolding and proper assembly of unfolded polypeptides generated under stress conditions. Essential for proper development of trachea, spermatogonia and spermatocytes. This Drosophila melanogaster (Fruit fly) protein is 60 kDa heat shock protein homolog 2, mitochondrial (Hsp60C).